Consider the following 233-residue polypeptide: Zinc import ATP-binding protein ZnuC (233 aa).

The region spanning 6 to 222 is the ABC transporter domain; the sequence is IEFRNVSKKF…SEFSNALSAL (217 aa). 38-45 is a binding site for ATP; that stretch reads GPNGAGKT.

Belongs to the ABC transporter superfamily. Zinc importer (TC 3.A.1.15.5) family. The complex is composed of two ATP-binding proteins (ZnuC), two transmembrane proteins (ZnuB) and a solute-binding protein (ZnuA).

Its subcellular location is the cell inner membrane. The enzyme catalyses Zn(2+)(out) + ATP(in) + H2O(in) = Zn(2+)(in) + ADP(in) + phosphate(in) + H(+)(in). Part of the ABC transporter complex ZnuABC involved in zinc import. Responsible for energy coupling to the transport system. In Rickettsia conorii (strain ATCC VR-613 / Malish 7), this protein is Zinc import ATP-binding protein ZnuC.